A 391-amino-acid polypeptide reads, in one-letter code: Aminoacetone oxidase (391 aa).

6 residues coordinate FAD: Ala14, Glu33, Ile134, Glu362, Asn374, and Ile375.

The protein belongs to the BaiN/RdsA family. As to quaternary structure, monomer. The cofactor is FAD.

Its function is as follows. Flavoprotein that probably catalyzes the condensation of two molecules of aminoacetone to yield 3,6-dimethyl-2,5-dihydropyrazine, which is subsequently oxidized to 2,5-dimethylpyrazine. It could be involved in a microbial defense mechanism related to aminoacetone catabolism through a pathway yielding dimethylpyrazine derivatives instead of methylglyoxal. It has also low aminoacetone oxidase activity, and can produce hydrogen peroxide from aminoacetone. In addition, it shows very low L-amino acid oxidase activity, and can produce hydrogen peroxide from peptone and from seven amino acids, L-aspartate, L-tryptophan, L-lysine, L-isoleucine, L-arginine, L-asparagine and L-glutamine. It cannot use L-malate, oxaloacetate or alpha-aminobutyrate. Plays a role in antioxidant defense. In Streptococcus cristatus, this protein is Aminoacetone oxidase.